The following is a 234-amino-acid chain: Thiamine-phosphate synthase (234 aa).

4-amino-2-methyl-5-(diphosphooxymethyl)pyrimidine contacts are provided by residues 65-69 (QYRNK) and Asn-97. 2 residues coordinate Mg(2+): Asp-98 and Asp-117. 4-amino-2-methyl-5-(diphosphooxymethyl)pyrimidine is bound at residue Ser-136. 2-[(2R,5Z)-2-carboxy-4-methylthiazol-5(2H)-ylidene]ethyl phosphate is bound at residue 163 to 165 (SHT). Lys-166 contacts 4-amino-2-methyl-5-(diphosphooxymethyl)pyrimidine. 2-[(2R,5Z)-2-carboxy-4-methylthiazol-5(2H)-ylidene]ethyl phosphate contacts are provided by residues Gly-192 and 212-213 (IS).

This sequence belongs to the thiamine-phosphate synthase family. Mg(2+) is required as a cofactor.

It catalyses the reaction 2-[(2R,5Z)-2-carboxy-4-methylthiazol-5(2H)-ylidene]ethyl phosphate + 4-amino-2-methyl-5-(diphosphooxymethyl)pyrimidine + 2 H(+) = thiamine phosphate + CO2 + diphosphate. The catalysed reaction is 2-(2-carboxy-4-methylthiazol-5-yl)ethyl phosphate + 4-amino-2-methyl-5-(diphosphooxymethyl)pyrimidine + 2 H(+) = thiamine phosphate + CO2 + diphosphate. It carries out the reaction 4-methyl-5-(2-phosphooxyethyl)-thiazole + 4-amino-2-methyl-5-(diphosphooxymethyl)pyrimidine + H(+) = thiamine phosphate + diphosphate. It functions in the pathway cofactor biosynthesis; thiamine diphosphate biosynthesis; thiamine phosphate from 4-amino-2-methyl-5-diphosphomethylpyrimidine and 4-methyl-5-(2-phosphoethyl)-thiazole: step 1/1. In terms of biological role, condenses 4-methyl-5-(beta-hydroxyethyl)thiazole monophosphate (THZ-P) and 2-methyl-4-amino-5-hydroxymethyl pyrimidine pyrophosphate (HMP-PP) to form thiamine monophosphate (TMP). The sequence is that of Thiamine-phosphate synthase from Xylella fastidiosa (strain 9a5c).